The following is a 72-amino-acid chain: Translation initiation factor IF-1 (72 aa).

The 72-residue stretch at M1 to K72 folds into the S1-like domain.

The protein belongs to the IF-1 family. Component of the 30S ribosomal translation pre-initiation complex which assembles on the 30S ribosome in the order IF-2 and IF-3, IF-1 and N-formylmethionyl-tRNA(fMet); mRNA recruitment can occur at any time during PIC assembly.

The protein resides in the cytoplasm. Functionally, one of the essential components for the initiation of protein synthesis. Stabilizes the binding of IF-2 and IF-3 on the 30S subunit to which N-formylmethionyl-tRNA(fMet) subsequently binds. Helps modulate mRNA selection, yielding the 30S pre-initiation complex (PIC). Upon addition of the 50S ribosomal subunit IF-1, IF-2 and IF-3 are released leaving the mature 70S translation initiation complex. The protein is Translation initiation factor IF-1 of Alkaliphilus oremlandii (strain OhILAs) (Clostridium oremlandii (strain OhILAs)).